A 152-amino-acid chain; its full sequence is Phospholipase A2 GL16-1 (152 aa).

The first 21 residues, Met-1–Thr-21, serve as a signal peptide directing secretion. A propeptide spanning residues Ile-22–Leu-27 is cleaved from the precursor. Disulfide bonds link Cys-38–Cys-104, Cys-54–Cys-151, Cys-56–Cys-72, Cys-71–Cys-132, Cys-78–Cys-125, Cys-88–Cys-118, and Cys-111–Cys-123. Residues Tyr-55, Gly-57, and Gly-59 each contribute to the Ca(2+) site. His-75 is an active-site residue. Asp-76 is a Ca(2+) binding site. The active site involves Asp-126.

This sequence belongs to the phospholipase A2 family. Group I subfamily. Requires Ca(2+) as cofactor.

The protein localises to the secreted. The catalysed reaction is a 1,2-diacyl-sn-glycero-3-phosphocholine + H2O = a 1-acyl-sn-glycero-3-phosphocholine + a fatty acid + H(+). Functionally, PA2 catalyzes the calcium-dependent hydrolysis of the 2-acyl groups in 3-sn-phosphoglycerides. In Laticauda semifasciata (Black-banded sea krait), this protein is Phospholipase A2 GL16-1.